A 715-amino-acid polypeptide reads, in one-letter code: MGTSLYRSTLLSTGGFSVSDYIRKFTKNKPDVNNIQPNVGFCHQSTQTSQQVKEVISAELELQQPEVTLPNDPSSQHSPEAHTGASEPLKPVSAGESSKALQKAKEISVKSSEPTHVQTFAPAVHLEQIDVHNVPKQETNSLVAAPADAKCVIETMTKVEKDIALQQERALERADDSHVANKVFLKSIIPGQQLEKIEDPQQQAEVSLFVDEDSLEKSVPGQHLDKKMEVLQKQAKDLPVVDEDSLNLSAPGQRQLEEKVDVPEKAEKKIDEAHKKMEEVPRKDELCIEKPVIRHAGIKTQHEETMGMETTVPKHDESKCPTETYVEKTENKNADVTLESDKIMICAVSPQNTSLDEDEKSKAAPLRKVESTLLIIDDSPPLPAPFDHRIVSAKQVPINSYYAVNPVEVLGGGRFGQVHKCAELSSGLTLAAKIIKVRGMKERDEVKNEIGVMNQLNHVNLIQLYDAFESRTNLTLIMEYVEGGELFERIIDESYQLTELDAIVFTRQICEGVQYLHQQYILHLDLKPENILCVNSTGNQIKIIDFGLARKYRPREKLKVNFGTPEFLAPEVVNYDFVSFPTDMWSVGVITYMLLSGLSPFMGDNDAETMNNILHAKWEFDTEAFENVSEEAKDFISSLLVSAKCSRLSASGCMKHSWLNNLEDKAKMYKVRLKSQMMLQRYLVAHRQWKKHFYAVAAANRLKRFQQSRSISTPN.

The tract at residues 67–114 (VTLPNDPSSQHSPEAHTGASEPLKPVSAGESSKALQKAKEISVKSSEP) is disordered. Positions 404-659 (VNPVEVLGGG…ASGCMKHSWL (256 aa)) constitute a Protein kinase domain. ATP-binding positions include 410–418 (LGGGRFGQV) and lysine 433. The active-site Proton acceptor is aspartate 525.

This sequence belongs to the protein kinase superfamily. CAMK Ser/Thr protein kinase family. Mg(2+) serves as cofactor. Phosphorylated on serine residues.

It is found in the cytoplasm. It carries out the reaction L-seryl-[myosin light chain] + ATP = O-phospho-L-seryl-[myosin light chain] + ADP + H(+). The catalysed reaction is L-threonyl-[myosin light chain] + ATP = O-phospho-L-threonyl-[myosin light chain] + ADP + H(+). In terms of biological role, kinase that phosphorylates MYL2 in vitro. Increases cardiomyocyte contractility. Required for sarcomere formation in the developing heart. The chain is Myosin light chain kinase 3 (mylk3) from Danio rerio (Zebrafish).